A 595-amino-acid chain; its full sequence is Aspartate--tRNA(Asp/Asn) ligase (595 aa).

Glu-175 is a binding site for L-aspartate. An aspartate region spans residues 199–202; it reads QQYK. L-aspartate is bound by residues Arg-221 and His-454. Position 221-223 (221-223) interacts with ATP; the sequence is RDE. Glu-488 lines the ATP pocket. Residue Arg-495 participates in L-aspartate binding. 540-543 is a binding site for ATP; it reads GIDR.

Belongs to the class-II aminoacyl-tRNA synthetase family. Type 1 subfamily. In terms of assembly, homodimer.

It is found in the cytoplasm. The enzyme catalyses tRNA(Asx) + L-aspartate + ATP = L-aspartyl-tRNA(Asx) + AMP + diphosphate. Functionally, aspartyl-tRNA synthetase with relaxed tRNA specificity since it is able to aspartylate not only its cognate tRNA(Asp) but also tRNA(Asn). Reaction proceeds in two steps: L-aspartate is first activated by ATP to form Asp-AMP and then transferred to the acceptor end of tRNA(Asp/Asn). The polypeptide is Aspartate--tRNA(Asp/Asn) ligase (Brucella abortus (strain S19)).